Consider the following 274-residue polypeptide: Large ribosomal subunit protein uL2 (274 aa).

The tract at residues 223–256 (VVMNPVDHPHGGGEGKTGEGRHPVDPWGNLTKGY) is disordered. Basic and acidic residues predominate over residues 229 to 246 (DHPHGGGEGKTGEGRHPV).

Belongs to the universal ribosomal protein uL2 family. Part of the 50S ribosomal subunit. Forms a bridge to the 30S subunit in the 70S ribosome.

Functionally, one of the primary rRNA binding proteins. Required for association of the 30S and 50S subunits to form the 70S ribosome, for tRNA binding and peptide bond formation. It has been suggested to have peptidyltransferase activity; this is somewhat controversial. Makes several contacts with the 16S rRNA in the 70S ribosome. This chain is Large ribosomal subunit protein uL2, found in Albidiferax ferrireducens (strain ATCC BAA-621 / DSM 15236 / T118) (Rhodoferax ferrireducens).